Here is a 1024-residue protein sequence, read N- to C-terminus: Beta-galactosidase (1024 aa).

Residues N103 and D202 each coordinate substrate. D202 lines the Na(+) pocket. Positions 417, 419, and 462 each coordinate Mg(2+). Substrate-binding positions include E462 and 538–541 (EYAH). E462 (proton donor) is an active-site residue. The active-site Nucleophile is the E538. Mg(2+) is bound at residue N598. The Na(+) site is built by F602 and N605. Substrate contacts are provided by N605 and W1000.

It belongs to the glycosyl hydrolase 2 family. Homotetramer. The cofactor is Mg(2+). Na(+) serves as cofactor.

It catalyses the reaction Hydrolysis of terminal non-reducing beta-D-galactose residues in beta-D-galactosides.. This chain is Beta-galactosidase, found in Escherichia coli O157:H7.